Consider the following 346-residue polypeptide: Trans-enoyl reductase FFUJ_12240 (346 aa).

Histidine 40–lysine 43 is a binding site for NADP(+). Leucine 124–leucine 131 provides a ligand contact to substrate. Residues alanine 157–threonine 160, serine 180–asparagine 183, tyrosine 198, and leucine 245–glutamate 246 contribute to the NADP(+) site. Alanine 266 to leucine 270 lines the substrate pocket. Valine 335–histidine 336 contributes to the NADP(+) binding site.

Belongs to the zinc-containing alcohol dehydrogenase family.

Its function is as follows. Trans-enoyl reductase; part of the gene cluster that mediates the biosynthesis of fujikurins A-D, secondary metabolites playing a role during rice infection. The polyketide synthase PKS19 acts with the trans-enoyl reductase FFUJ_12240 and the polyketide transferase FFUJ_12241 to produce fujikurins, however, the biosynthesis pathway has not been identified yet. This Gibberella fujikuroi (strain CBS 195.34 / IMI 58289 / NRRL A-6831) (Bakanae and foot rot disease fungus) protein is Trans-enoyl reductase FFUJ_12240.